The primary structure comprises 392 residues: GTPase Obg (392 aa).

In terms of domain architecture, Obg spans 1 to 159; it reads MKFVDEATIL…RDLQLELMLL (159 aa). The tract at residues 127–148 is disordered; that stretch reads NTRFKSSVNRTPRQKTMGTPGD. A compositionally biased stretch (polar residues) spans 129–143; it reads RFKSSVNRTPRQKTM. The OBG-type G domain occupies 160–333; it reads ADVGMLGMPN…LCWDVMTFII (174 aa). GTP contacts are provided by residues 166 to 173, 191 to 195, 213 to 216, 283 to 286, and 314 to 316; these read GMPNAGKS, FTTLV, DIPG, NKID, and SAA. Mg(2+) contacts are provided by Ser173 and Thr193. Residues 362-386 are compositionally biased toward acidic residues; sequence EEAEAEAEDDEDWDDDWDEDDEEGV. Residues 362–392 are disordered; sequence EEAEAEAEDDEDWDDDWDEDDEEGVEFIYKR.

This sequence belongs to the TRAFAC class OBG-HflX-like GTPase superfamily. OBG GTPase family. In terms of assembly, monomer. Requires Mg(2+) as cofactor.

Its subcellular location is the cytoplasm. Functionally, an essential GTPase which binds GTP, GDP and possibly (p)ppGpp with moderate affinity, with high nucleotide exchange rates and a fairly low GTP hydrolysis rate. Plays a role in control of the cell cycle, stress response, ribosome biogenesis and in those bacteria that undergo differentiation, in morphogenesis control. The protein is GTPase Obg of Klebsiella pneumoniae subsp. pneumoniae (strain ATCC 700721 / MGH 78578).